The sequence spans 559 residues: DNA ligase (559 aa).

E247 is an ATP binding site. The active-site N6-AMP-lysine intermediate is the K249. Residues R254, R269, E299, F339, R414, and K420 each coordinate ATP.

The protein belongs to the ATP-dependent DNA ligase family. The cofactor is Mg(2+).

It catalyses the reaction ATP + (deoxyribonucleotide)n-3'-hydroxyl + 5'-phospho-(deoxyribonucleotide)m = (deoxyribonucleotide)n+m + AMP + diphosphate.. Functionally, DNA ligase that seals nicks in double-stranded DNA during DNA replication, DNA recombination and DNA repair. This is DNA ligase from Pyrococcus abyssi (strain GE5 / Orsay).